The chain runs to 350 residues: tRNA uridine(34) hydroxylase (350 aa).

The Rhodanese domain occupies 146-240 (DDPDALFIDM…YARKAREQGL (95 aa)). Cysteine 200 (cysteine persulfide intermediate) is an active-site residue.

This sequence belongs to the TrhO family.

It catalyses the reaction uridine(34) in tRNA + AH2 + O2 = 5-hydroxyuridine(34) in tRNA + A + H2O. Functionally, catalyzes oxygen-dependent 5-hydroxyuridine (ho5U) modification at position 34 in tRNAs, the first step in 5-carboxymethoxyuridine (cmo5U) biosynthesis. May be part of an alternate pathway, which is able to bypass cmo5U biogenesis in a subset of tRNAs under aerobic conditions. The polypeptide is tRNA uridine(34) hydroxylase (Escherichia coli (strain K12)).